The following is a 336-amino-acid chain: Dihydroorotate dehydrogenase (quinone) (336 aa).

FMN is bound by residues 62–66 (AGLDK) and T86. K66 contributes to the substrate binding site. 111-115 (NRMGF) provides a ligand contact to substrate. Positions 139 and 172 each coordinate FMN. Substrate is bound at residue N172. The Nucleophile role is filled by S175. N177 is a substrate binding site. 2 residues coordinate FMN: K217 and T245. 246–247 (NT) is a substrate binding site. Residues G268, G297, and 318–319 (YS) each bind FMN.

The protein belongs to the dihydroorotate dehydrogenase family. Type 2 subfamily. In terms of assembly, monomer. It depends on FMN as a cofactor.

It localises to the cell membrane. It catalyses the reaction (S)-dihydroorotate + a quinone = orotate + a quinol. The protein operates within pyrimidine metabolism; UMP biosynthesis via de novo pathway; orotate from (S)-dihydroorotate (quinone route): step 1/1. In terms of biological role, catalyzes the conversion of dihydroorotate to orotate with quinone as electron acceptor. In Aliivibrio fischeri (strain MJ11) (Vibrio fischeri), this protein is Dihydroorotate dehydrogenase (quinone).